The chain runs to 481 residues: Ribulose bisphosphate carboxylase large chain (481 aa).

Positions 1–2 (MS) are excised as a propeptide. Position 3 is an N-acetylproline (Pro-3). The residue at position 14 (Lys-14) is an N6,N6,N6-trimethyllysine. Positions 123 and 173 each coordinate substrate. Lys-175 serves as the catalytic Proton acceptor. Lys-177 contacts substrate. Residues Lys-201, Asp-203, and Glu-204 each coordinate Mg(2+). Lys-201 is subject to N6-carboxylysine. The active-site Proton acceptor is the His-294. Substrate contacts are provided by Arg-295, His-327, and Ser-379.

The protein belongs to the RuBisCO large chain family. Type I subfamily. Heterohexadecamer of 8 large chains and 8 small chains; disulfide-linked. The disulfide link is formed within the large subunit homodimers. Mg(2+) serves as cofactor. In terms of processing, the disulfide bond which can form in the large chain dimeric partners within the hexadecamer appears to be associated with oxidative stress and protein turnover.

It localises to the plastid. The protein resides in the chloroplast. The enzyme catalyses 2 (2R)-3-phosphoglycerate + 2 H(+) = D-ribulose 1,5-bisphosphate + CO2 + H2O. The catalysed reaction is D-ribulose 1,5-bisphosphate + O2 = 2-phosphoglycolate + (2R)-3-phosphoglycerate + 2 H(+). Its function is as follows. RuBisCO catalyzes two reactions: the carboxylation of D-ribulose 1,5-bisphosphate, the primary event in carbon dioxide fixation, as well as the oxidative fragmentation of the pentose substrate in the photorespiration process. Both reactions occur simultaneously and in competition at the same active site. This chain is Ribulose bisphosphate carboxylase large chain, found in Coffea arabica (Arabian coffee).